Consider the following 110-residue polypeptide: UPF0060 membrane protein BTH_I2792 (110 aa).

4 helical membrane-spanning segments follow: residues 9 to 29, 34 to 54, 64 to 84, and 86 to 106; these read ALFV…WLVL, PVWL…LLTL, AAYG…VDGV, and LSRW…VIAL.

Belongs to the UPF0060 family.

Its subcellular location is the cell inner membrane. The protein is UPF0060 membrane protein BTH_I2792 of Burkholderia thailandensis (strain ATCC 700388 / DSM 13276 / CCUG 48851 / CIP 106301 / E264).